Here is a 261-residue protein sequence, read N- to C-terminus: Yop proteins translocation protein T (261 aa).

Helical transmembrane passes span 20–40, 44–64, 77–97, 131–151, 180–200, 214–234, and 239–259; these read FMACFVILPVLSKQLLGGVLL, IVCSLALYVYPAVANQPYIEV, IILGLLIGFVATIPFWALESA, TLITIFFSGGAFLSLLSALFH, ILLIAAVLAAPLLIAMFLAEF, VFVLAMPIKSAIASLLLVIYC, and SHASKAMLLVMDPISLLIPVL.

Belongs to the FliR/MopE/SpaR family.

It localises to the cell membrane. Component of the yop secretion machinery. The polypeptide is Yop proteins translocation protein T (yscT) (Yersinia pestis).